A 31-amino-acid polypeptide reads, in one-letter code: Cytochrome b6-f complex subunit 6 (31 aa).

The helical transmembrane segment at 3–23 threads the bilayer; that stretch reads TIISYFGFLLASIIFTLILFI.

This sequence belongs to the PetL family. The 4 large subunits of the cytochrome b6-f complex are cytochrome b6, subunit IV (17 kDa polypeptide, PetD), cytochrome f and the Rieske protein, while the 4 small subunits are PetG, PetL, PetM and PetN. The complex functions as a dimer.

Its subcellular location is the plastid. It localises to the chloroplast thylakoid membrane. In terms of biological role, component of the cytochrome b6-f complex, which mediates electron transfer between photosystem II (PSII) and photosystem I (PSI), cyclic electron flow around PSI, and state transitions. PetL is important for photoautotrophic growth as well as for electron transfer efficiency and stability of the cytochrome b6-f complex. This is Cytochrome b6-f complex subunit 6 from Abies homolepis (Nikko fir).